Consider the following 264-residue polypeptide: Nuclear egress protein 1 (264 aa).

The span at 1 to 12 (MTVHKSRIRRSR) shows a compositional bias: basic residues. A disordered region spans residues 1 to 22 (MTVHKSRIRRSRSLSVTHRIQK). Residues 83–187 (CLEFSPYANE…HIVFQSRTLH (105 aa)) form a CCCH-type zinc finger.

The protein belongs to the herpesviridae NEC1 protein family. As to quaternary structure, forms a heterohexameric complex with NEC2. Interacts with capsid vertex specific component 2/CVC2; this interaction directs the capsid to the host inner nuclear membrane to initiate budding. Post-translationally, phosphorylated at serine residues in the N-terminus. This phosphorylation regulates the localization within the inner nuclear membrane.

The protein localises to the host nucleus inner membrane. Its function is as follows. Plays an essential role in virion nuclear egress, the first step of virion release from infected cell. Within the host nucleus, NEC1 interacts with the newly formed capsid through the vertexes and directs it to the inner nuclear membrane by associating with NEC2. Induces the budding of the capsid at the inner nuclear membrane as well as its envelopment into the perinuclear space. There, the NEC1/NEC2 complex promotes the fusion of the enveloped capsid with the outer nuclear membrane and the subsequent release of the viral capsid into the cytoplasm where it will reach the secondary budding sites in the host Golgi or trans-Golgi network. The protein is Nuclear egress protein 1 of Human herpesvirus 6A (strain Uganda-1102) (HHV-6 variant A).